Here is a 660-residue protein sequence, read N- to C-terminus: Probable Xaa-Pro aminopeptidase PTRG_10574 (660 aa).

Asp-274, Asp-285, Glu-435, and Glu-476 together coordinate Mn(2+). The disordered stretch occupies residues 641–660; sequence SAGSGSTPLWKPHNKQDKKN.

It belongs to the peptidase M24B family. Mn(2+) serves as cofactor.

The catalysed reaction is Release of any N-terminal amino acid, including proline, that is linked to proline, even from a dipeptide or tripeptide.. Functionally, catalyzes the removal of a penultimate prolyl residue from the N-termini of peptides. The sequence is that of Probable Xaa-Pro aminopeptidase PTRG_10574 from Pyrenophora tritici-repentis (strain Pt-1C-BFP) (Wheat tan spot fungus).